The following is a 109-amino-acid chain: Large ribosomal subunit protein uL24 (109 aa).

This sequence belongs to the universal ribosomal protein uL24 family. Part of the 50S ribosomal subunit.

In terms of biological role, one of two assembly initiator proteins, it binds directly to the 5'-end of the 23S rRNA, where it nucleates assembly of the 50S subunit. Its function is as follows. One of the proteins that surrounds the polypeptide exit tunnel on the outside of the subunit. The sequence is that of Large ribosomal subunit protein uL24 from Rickettsia rickettsii (strain Iowa).